The chain runs to 374 residues: Flap endonuclease 1 (374 aa).

Positions 1–105 are N-domain; the sequence is MGIKGLTALI…ELLQKRFGRR (105 aa). A Mg(2+)-binding site is contributed by Asp34. DNA contacts are provided by Arg47 and Arg71. Asp87 is a Mg(2+) binding site. Residues 103–122 are disordered; that stretch reads GRREEAREQEEEQKDVADAE. The segment at 123–254 is I-domain; sequence KMDQLARRQV…KTALKLIREH (132 aa). Mg(2+)-binding residues include Glu159, Glu161, Asp180, and Asp182. Glu159 serves as a coordination point for DNA. DNA is bound by residues Gly232 and Asp234. Asp234 contributes to the Mg(2+) binding site. Positions 335 to 374 are disordered; it reads SLSQKQQGRLDGFFTVKPGSAPPKRKAEDDKKNVKKKGKK. Residues 340-348 form an interaction with PCNA region; that stretch reads QQGRLDGFF.

This sequence belongs to the XPG/RAD2 endonuclease family. FEN1 subfamily. In terms of assembly, interacts with PCNA. Three molecules of FEN1 bind to one PCNA trimer with each molecule binding to one PCNA monomer. PCNA stimulates the nuclease activity without altering cleavage specificity. Requires Mg(2+) as cofactor. Phosphorylated. Phosphorylation upon DNA damage induces relocalization to the nuclear plasma.

Its subcellular location is the nucleus. It localises to the nucleolus. The protein localises to the nucleoplasm. The protein resides in the mitochondrion. Functionally, structure-specific nuclease with 5'-flap endonuclease and 5'-3' exonuclease activities involved in DNA replication and repair. During DNA replication, cleaves the 5'-overhanging flap structure that is generated by displacement synthesis when DNA polymerase encounters the 5'-end of a downstream Okazaki fragment. It enters the flap from the 5'-end and then tracks to cleave the flap base, leaving a nick for ligation. Also involved in the long patch base excision repair (LP-BER) pathway, by cleaving within the apurinic/apyrimidinic (AP) site-terminated flap. Acts as a genome stabilization factor that prevents flaps from equilibrating into structures that lead to duplications and deletions. Also possesses 5'-3' exonuclease activity on nicked or gapped double-stranded DNA, and exhibits RNase H activity. Also involved in replication and repair of rDNA and in repairing mitochondrial DNA. The protein is Flap endonuclease 1 of Mycosarcoma maydis (Corn smut fungus).